We begin with the raw amino-acid sequence, 465 residues long: MKLWGGRFKKGTDELVNDFNSSINIDSRMYKEDIEGSLAHASMLGEQNIISKEDSLKITSGLLEILKRMDNDVINIDLTSEDIHSFVESTLTYYIGEYGKMLHTARSRNDQVTLDLKLYLKKALVKLRKDILYLEEVLLEKSKEHISTIMPGYTHMQKAQPITLSHHLLAYAEMFKRDIGRINDAYKRTDEMPLGSGALATSTYPIDRYMVAKDLGFSKITLNSLDSVSDRDYVIETLSALSLIMMHLSRFSEEIILWCTGEFNFVELDDSYSTGSSIMPQKKNPDVAELIRGKTGRVYGDLITLLTVMKGIPLAYNKDMQEDKEALFDALDTVTLSLKTFAGMIKTMKINKDNMKKSAALGFTNATDLADYLVKKGSYFRDAHGIVGQIVLQCIKDNKMIEDLTLAELKEYSPTFEEDVYDAINLYTCVEERKVIGGPSRESVKFQIKELQEFIHQFKGDEIYD.

This sequence belongs to the lyase 1 family. Argininosuccinate lyase subfamily.

The protein resides in the cytoplasm. The catalysed reaction is 2-(N(omega)-L-arginino)succinate = fumarate + L-arginine. It functions in the pathway amino-acid biosynthesis; L-arginine biosynthesis; L-arginine from L-ornithine and carbamoyl phosphate: step 3/3. This Clostridium botulinum (strain Alaska E43 / Type E3) protein is Argininosuccinate lyase.